A 243-amino-acid chain; its full sequence is Phosphate-specific transport system accessory protein PhoU (243 aa).

It belongs to the PhoU family. Homodimer.

It localises to the cytoplasm. Part of the phosphate (Pho) regulon, which plays a key role in phosphate homeostasis. Encoded together with proteins of the phosphate-specific transport (Pst) system in the polycistronic pstSCAB-phoU operon. PhoU is essential for the repression of the Pho regulon at high phosphate conditions. In this role, it may bind, possibly as a chaperone, to PhoR, PhoB or a PhoR-PhoB complex to promote dephosphorylation of phospho-PhoB, or inhibit formation of the PhoR-PhoB transitory complex. The chain is Phosphate-specific transport system accessory protein PhoU from Serratia marcescens.